The sequence spans 380 residues: Erythronate-4-phosphate dehydrogenase (380 aa).

Positions 45 and 66 each coordinate substrate. Residues Gln126–Val127, Asp146, Thr174, Ala205–Arg207, and Asp231 contribute to the NAD(+) site. Arg207 is an active-site residue. The active site involves Glu236. The Proton donor role is filled by His253. Residue Gly256 coordinates NAD(+). Position 257 (Tyr257) interacts with substrate.

Belongs to the D-isomer specific 2-hydroxyacid dehydrogenase family. PdxB subfamily. Homodimer.

It localises to the cytoplasm. It carries out the reaction 4-phospho-D-erythronate + NAD(+) = (R)-3-hydroxy-2-oxo-4-phosphooxybutanoate + NADH + H(+). It functions in the pathway cofactor biosynthesis; pyridoxine 5'-phosphate biosynthesis; pyridoxine 5'-phosphate from D-erythrose 4-phosphate: step 2/5. In terms of biological role, catalyzes the oxidation of erythronate-4-phosphate to 3-hydroxy-2-oxo-4-phosphonooxybutanoate. The polypeptide is Erythronate-4-phosphate dehydrogenase (Pseudomonas savastanoi pv. phaseolicola (strain 1448A / Race 6) (Pseudomonas syringae pv. phaseolicola (strain 1448A / Race 6))).